The primary structure comprises 340 residues: Dihydroorotate dehydrogenase (quinone) (340 aa).

Residues 65–69 and Thr-89 contribute to the FMN site; that span reads AGLDK. Lys-69 is a binding site for substrate. Substrate is bound at residue 114 to 118; it reads NRMGF. Positions 142 and 175 each coordinate FMN. Asn-175 lines the substrate pocket. Catalysis depends on Ser-178, which acts as the Nucleophile. Asn-180 lines the substrate pocket. FMN is bound by residues Lys-220 and Thr-248. 249–250 is a substrate binding site; that stretch reads NT. Residues Gly-271, Gly-300, and 321-322 each bind FMN; that span reads YT.

It belongs to the dihydroorotate dehydrogenase family. Type 2 subfamily. Monomer. It depends on FMN as a cofactor.

The protein resides in the cell membrane. It carries out the reaction (S)-dihydroorotate + a quinone = orotate + a quinol. It participates in pyrimidine metabolism; UMP biosynthesis via de novo pathway; orotate from (S)-dihydroorotate (quinone route): step 1/1. Catalyzes the conversion of dihydroorotate to orotate with quinone as electron acceptor. The chain is Dihydroorotate dehydrogenase (quinone) from Paraburkholderia xenovorans (strain LB400).